The following is a 212-amino-acid chain: NADH dehydrogenase [ubiquinone] iron-sulfur protein 8, mitochondrial (212 aa).

The transit peptide at 1-36 (MRCLTMPMLLRALAQAQAARAGHASVRGLHSSAVAA) directs the protein to the mitochondrion. 4Fe-4S ferredoxin-type domains lie at 104–133 (RRYP…IEAE) and 143–172 (TRYD…EGPN). Positions 113, 116, 119, 123, 152, 155, 158, and 162 each coordinate [4Fe-4S] cluster.

This sequence belongs to the complex I 23 kDa subunit family. As to quaternary structure, core subunit of respiratory chain NADH dehydrogenase (Complex I) which is composed of 45 different subunits. This is a component of the iron-sulfur (IP) fragment of the enzyme. Interacts with RAB5IF. It depends on [4Fe-4S] cluster as a cofactor.

It localises to the mitochondrion inner membrane. The catalysed reaction is a ubiquinone + NADH + 5 H(+)(in) = a ubiquinol + NAD(+) + 4 H(+)(out). Functionally, core subunit of the mitochondrial membrane respiratory chain NADH dehydrogenase (Complex I) which catalyzes electron transfer from NADH through the respiratory chain, using ubiquinone as an electron acceptor. Essential for the catalytic activity and assembly of complex I. This chain is NADH dehydrogenase [ubiquinone] iron-sulfur protein 8, mitochondrial (NDUFS8), found in Bos taurus (Bovine).